Consider the following 243-residue polypeptide: Urease accessory protein UreF (243 aa).

This sequence belongs to the UreF family. In terms of assembly, ureD, UreF and UreG form a complex that acts as a GTP-hydrolysis-dependent molecular chaperone, activating the urease apoprotein by helping to assemble the nickel containing metallocenter of UreC. The UreE protein probably delivers the nickel.

It is found in the cytoplasm. Its function is as follows. Required for maturation of urease via the functional incorporation of the urease nickel metallocenter. This Rhodopseudomonas palustris (strain BisB5) protein is Urease accessory protein UreF.